A 48-amino-acid polypeptide reads, in one-letter code: Large ribosomal subunit protein bL32 (48 aa).

The segment at 28-48 (VKDKDGSWKMPHRINKTTGEY) is disordered.

This sequence belongs to the bacterial ribosomal protein bL32 family.

In Campylobacter concisus (strain 13826), this protein is Large ribosomal subunit protein bL32.